The primary structure comprises 129 residues: Protein Turandot A2 (129 aa).

Residues 1–21 form the signal peptide; the sequence is MNSSTSLMCFALLLISPLCMG. N-linked (GlcNAc...) asparagine glycosylation is present at Asn49.

The protein belongs to the Turandot family.

The protein localises to the secreted. Its function is as follows. A humoral factor that plays a role in stress tolerance; gives increased resistance to the lethal effects of bacterial challenge and stress. Regulated by the JAK/STAT pathway and NF-KB-like Relish pathway in the fat body, upd3 in the hemocytes and Mekk1 in response to septic injury and consequent immune response. The sequence is that of Protein Turandot A2 (TotA2) from Drosophila simulans (Fruit fly).